We begin with the raw amino-acid sequence, 688 residues long: MTKDFLFEIGVEEMPAHVVSKSVKQLADRTGKFLKENGLGFKEIKTYSTPRRLTVLVKELDEKQADVDEVKKGPAKKIAQDADGNWTKAAVGFARGQGMSADDIYFEELKGVEYAYVHVQKAGKEAKEILLGLDEVIKAMTFPTKMRWDSQDFEFVRPIHWLVALYGSEVVPVEFLDITAGRKTAGHRFLGDSVVLANADDYVEALRDQYVIVDADERKAMIVSQINDLVNSHNWQIKLDASLLEEVNNLVEYPTVFAGSFDQKYLEIPDEVLITSMKDNQRYFEVYDQEGKLINCFISVRNGNKDHLENVISGNEKVLVARLDDAVFFYDEDRKYPISHFVDRMDSVSFHDKIGSMAEKMTRVRIIGDYLAKRFGLSAEEVADFDRVSGLYKFDLVTQMVGEFAELQGVMGMHYACLAGENENVSVAIKEHYMPTTAEGDLPKTKVGALLSVADKLDTIIAFFGAGMIPSSSNDPYALRRYAYGIVRILLNEDWSLPFDQVVPEIVELLSGKTPAKLPQGAEEDKQLADFIRDRIKQFLQKNNYQYDVIDAVLASSEQDPSQILAAAKVLQQHHDDEAFKPVVESLTRIANILKKAKFSQASPVDPSLFEDRSEQDLYDGVEALANVKDHAELYEAFVALQGVIDRYFDVNMIMAKDEAVKNNRLSQLAAVNDLAKRLGDLSKLVIK.

It belongs to the class-II aminoacyl-tRNA synthetase family. In terms of assembly, tetramer of two alpha and two beta subunits.

It is found in the cytoplasm. It catalyses the reaction tRNA(Gly) + glycine + ATP = glycyl-tRNA(Gly) + AMP + diphosphate. This is Glycine--tRNA ligase beta subunit from Lactobacillus delbrueckii subsp. bulgaricus (strain ATCC BAA-365 / Lb-18).